We begin with the raw amino-acid sequence, 136 residues long: MSTPNLYDSTNKPLYGERLIEESKIICFDNPNKKRIYEISIELPEFTCKCPFSGYPDFAKLNIFYQPNSKVYELKSLKLYINHFRDLKISHEEVVNRIMDDLLNAAAPHWIHLNADFNPRGNVSMKLDIYSGQKRN.

The active-site Thioimide intermediate is the Cys50. Residue Asp57 is the Proton donor of the active site. Substrate contacts are provided by residues 72 to 74 (YEL) and 91 to 92 (HE).

The protein belongs to the GTP cyclohydrolase I family. QueF type 1 subfamily.

Its subcellular location is the cytoplasm. It carries out the reaction 7-aminomethyl-7-carbaguanine + 2 NADP(+) = 7-cyano-7-deazaguanine + 2 NADPH + 3 H(+). Its pathway is tRNA modification; tRNA-queuosine biosynthesis. Its function is as follows. Catalyzes the NADPH-dependent reduction of 7-cyano-7-deazaguanine (preQ0) to 7-aminomethyl-7-deazaguanine (preQ1). The chain is NADPH-dependent 7-cyano-7-deazaguanine reductase from Prochlorococcus marinus (strain MIT 9515).